A 350-amino-acid chain; its full sequence is 2-oxoglutarate-dependent ethylene/succinate-forming enzyme (350 aa).

The Fe2OG dioxygenase domain occupies 166 to 286 (GWHHMRVLRF…RFACAYFHEP (121 aa)). Fe cation contacts are provided by H189 and H268.

It belongs to the iron/ascorbate-dependent oxidoreductase family. As to quaternary structure, monomer. The cofactor is Fe(2+).

The enzyme catalyses 2-oxoglutarate + O2 + 2 H(+) = ethene + 3 CO2 + H2O. The catalysed reaction is L-arginine + 2-oxoglutarate + O2 = guanidine + L-glutamate 5-semialdehyde + succinate + CO2. The protein operates within alkene biosynthesis; ethylene biosynthesis via 2-oxoglutarate. Simultaneously catalyzes two reactions, namely formation of ethylene and of succinate from 2-oxoglutarate. The chain is 2-oxoglutarate-dependent ethylene/succinate-forming enzyme (efe) from Pseudomonas amygdali pv. sesami (Pseudomonas syringae pv. sesami).